The chain runs to 474 residues: Ribosomal protein uS12 methylthiotransferase RimO (474 aa).

The region spanning 37–147 is the MTTase N-terminal domain; the sequence is NRIGFVSLGC…VLNHVHKYVP (111 aa). [4Fe-4S] cluster is bound by residues Cys-46, Cys-82, Cys-111, Cys-179, Cys-183, and Cys-186. The Radical SAM core domain occupies 165 to 402; that stretch reads LTPKHYAYLK…MEVQAEISAE (238 aa). In terms of domain architecture, TRAM spans 405 to 471; sequence ARLVGRELDI…EHDLWAELVA (67 aa).

The protein belongs to the methylthiotransferase family. RimO subfamily. The cofactor is [4Fe-4S] cluster.

The protein resides in the cytoplasm. It carries out the reaction L-aspartate(89)-[ribosomal protein uS12]-hydrogen + (sulfur carrier)-SH + AH2 + 2 S-adenosyl-L-methionine = 3-methylsulfanyl-L-aspartate(89)-[ribosomal protein uS12]-hydrogen + (sulfur carrier)-H + 5'-deoxyadenosine + L-methionine + A + S-adenosyl-L-homocysteine + 2 H(+). Catalyzes the methylthiolation of an aspartic acid residue of ribosomal protein uS12. The protein is Ribosomal protein uS12 methylthiotransferase RimO of Shewanella amazonensis (strain ATCC BAA-1098 / SB2B).